The primary structure comprises 229 residues: MLTRKQHELLMFIHERIKETGVSPSFDEMKEALDLASKSGIHRLITALEERGFLRRLPHRARALEVVRLPQQATAAAPPKGRAPFKPQLVEAGQAMPVAANDTRELPILGKIAAGTPIEAIQQERDRLPVPEAMLGAGEHFVLEIQGDSMINAGILDGDFVVIRRTDSANSGDIVVALVDGEEATLKRLRKKGASIALEAANPAYETRIFGPDRVAVQGRLVGLIRRYH.

The segment at residues 26 to 46 (FDEMKEALDLASKSGIHRLIT) is a DNA-binding region (H-T-H motif). Active-site for autocatalytic cleavage activity residues include Ser-149 and Lys-187.

Belongs to the peptidase S24 family. As to quaternary structure, homodimer.

It carries out the reaction Hydrolysis of Ala-|-Gly bond in repressor LexA.. Its function is as follows. Represses a number of genes involved in the response to DNA damage (SOS response), including recA and lexA. In the presence of single-stranded DNA, RecA interacts with LexA causing an autocatalytic cleavage which disrupts the DNA-binding part of LexA, leading to derepression of the SOS regulon and eventually DNA repair. The polypeptide is LexA repressor (Phenylobacterium zucineum (strain HLK1)).